A 134-amino-acid polypeptide reads, in one-letter code: Small ribosomal subunit protein uS8c (134 aa).

This sequence belongs to the universal ribosomal protein uS8 family. As to quaternary structure, part of the 30S ribosomal subunit.

It localises to the plastid. The protein localises to the chloroplast. In terms of biological role, one of the primary rRNA binding proteins, it binds directly to 16S rRNA central domain where it helps coordinate assembly of the platform of the 30S subunit. The protein is Small ribosomal subunit protein uS8c (rps8) of Phaseolus angularis (Azuki bean).